Here is a 276-residue protein sequence, read N- to C-terminus: D-apionate oxidoisomerase (276 aa).

NAD(+)-binding positions include 12 to 14, Glu33, and Asp69; that span reads GKM. Residues His114 and Glu184 each coordinate Zn(2+).

The protein belongs to the ApnO family. Zn(2+) is required as a cofactor.

The enzyme catalyses D-apionate + NAD(+) = 3-oxoisoapionate + NADH + H(+). It participates in carbohydrate metabolism. Functionally, involved in catabolism of D-apiose. Catalyzes the conversion of D-apionate to 3-oxo-isoapionate. This is D-apionate oxidoisomerase from Cupriavidus necator (strain ATCC 43291 / DSM 13513 / CCUG 52238 / LMG 8453 / N-1) (Ralstonia eutropha).